The sequence spans 439 residues: Proline--tRNA ligase (439 aa).

The protein belongs to the class-II aminoacyl-tRNA synthetase family. ProS type 2 subfamily. As to quaternary structure, homodimer.

It localises to the cytoplasm. The catalysed reaction is tRNA(Pro) + L-proline + ATP = L-prolyl-tRNA(Pro) + AMP + diphosphate. In terms of biological role, catalyzes the attachment of proline to tRNA(Pro) in a two-step reaction: proline is first activated by ATP to form Pro-AMP and then transferred to the acceptor end of tRNA(Pro). This Bradyrhizobium diazoefficiens (strain JCM 10833 / BCRC 13528 / IAM 13628 / NBRC 14792 / USDA 110) protein is Proline--tRNA ligase.